A 209-amino-acid polypeptide reads, in one-letter code: Imidazole glycerol phosphate synthase subunit HisH (209 aa).

Positions 1 to 205 (MIAIIDYGMG…KGVVETWKSS (205 aa)) constitute a Glutamine amidotransferase type-1 domain. The active-site Nucleophile is C79. Active-site residues include H180 and E182.

As to quaternary structure, heterodimer of HisH and HisF.

It is found in the cytoplasm. It catalyses the reaction 5-[(5-phospho-1-deoxy-D-ribulos-1-ylimino)methylamino]-1-(5-phospho-beta-D-ribosyl)imidazole-4-carboxamide + L-glutamine = D-erythro-1-(imidazol-4-yl)glycerol 3-phosphate + 5-amino-1-(5-phospho-beta-D-ribosyl)imidazole-4-carboxamide + L-glutamate + H(+). The catalysed reaction is L-glutamine + H2O = L-glutamate + NH4(+). It functions in the pathway amino-acid biosynthesis; L-histidine biosynthesis; L-histidine from 5-phospho-alpha-D-ribose 1-diphosphate: step 5/9. Functionally, IGPS catalyzes the conversion of PRFAR and glutamine to IGP, AICAR and glutamate. The HisH subunit catalyzes the hydrolysis of glutamine to glutamate and ammonia as part of the synthesis of IGP and AICAR. The resulting ammonia molecule is channeled to the active site of HisF. The polypeptide is Imidazole glycerol phosphate synthase subunit HisH (Bacillus cereus (strain AH187)).